A 389-amino-acid polypeptide reads, in one-letter code: Lipid-A-disaccharide synthase (389 aa).

The protein belongs to the LpxB family.

The catalysed reaction is a lipid X + a UDP-2-N,3-O-bis[(3R)-3-hydroxyacyl]-alpha-D-glucosamine = a lipid A disaccharide + UDP + H(+). It participates in bacterial outer membrane biogenesis; LPS lipid A biosynthesis. In terms of biological role, condensation of UDP-2,3-diacylglucosamine and 2,3-diacylglucosamine-1-phosphate to form lipid A disaccharide, a precursor of lipid A, a phosphorylated glycolipid that anchors the lipopolysaccharide to the outer membrane of the cell. This chain is Lipid-A-disaccharide synthase, found in Burkholderia ambifaria (strain ATCC BAA-244 / DSM 16087 / CCUG 44356 / LMG 19182 / AMMD) (Burkholderia cepacia (strain AMMD)).